A 126-amino-acid chain; its full sequence is Putative phosphotransferase enzyme IIB component UU178 (126 aa).

A helical membrane pass occupies residues 11–31; sequence LIIFLGIITFGIFIIYFFTKA. One can recognise a PTS EIIB type-1 domain in the interval 49-126; the sequence is PFSLNDFYNC…KELIKKDLFS (78 aa).

It to M.genitalium MG129 and M.pneumoniae MPN268.

It is found in the membrane. Its function is as follows. The phosphoenolpyruvate-dependent sugar phosphotransferase system (PTS), a major carbohydrate active -transport system, catalyzes the phosphorylation of incoming sugar substrates concomitant with their translocation across the cell membrane. This Ureaplasma parvum serovar 3 (strain ATCC 700970) protein is Putative phosphotransferase enzyme IIB component UU178.